A 188-amino-acid chain; its full sequence is Inosine triphosphate pyrophosphatase (188 aa).

9–14 provides a ligand contact to ITP; it reads TGNAKK. Glu-39 contributes to the Mg(2+) binding site. ITP-binding positions include Lys-51, 67-68, Lys-84, 143-146, Lys-166, and 171-172; these read DT, FGWD, and HR.

The protein belongs to the HAM1 NTPase family. Homodimer. The cofactor is Mg(2+). It depends on Mn(2+) as a cofactor.

It localises to the cytoplasm. The enzyme catalyses ITP + H2O = IMP + diphosphate + H(+). It carries out the reaction dITP + H2O = dIMP + diphosphate + H(+). It catalyses the reaction XTP + H2O = XMP + diphosphate + H(+). Its function is as follows. Pyrophosphatase that hydrolyzes non-canonical purine nucleotides such as inosine triphosphate (ITP), deoxyinosine triphosphate (dITP) or xanthosine 5'-triphosphate (XTP) to their respective monophosphate derivatives. The enzyme does not distinguish between the deoxy- and ribose forms. Probably excludes non-canonical purines from RNA and DNA precursor pools, thus preventing their incorporation into RNA and DNA and avoiding chromosomal lesions. In Anopheles gambiae (African malaria mosquito), this protein is Inosine triphosphate pyrophosphatase.